The primary structure comprises 194 residues: ATP-dependent Clp protease proteolytic subunit (194 aa).

Residue Ser97 is the Nucleophile of the active site. His122 is an active-site residue.

The protein belongs to the peptidase S14 family. In terms of assembly, fourteen ClpP subunits assemble into 2 heptameric rings which stack back to back to give a disk-like structure with a central cavity, resembling the structure of eukaryotic proteasomes.

It localises to the cytoplasm. It catalyses the reaction Hydrolysis of proteins to small peptides in the presence of ATP and magnesium. alpha-casein is the usual test substrate. In the absence of ATP, only oligopeptides shorter than five residues are hydrolyzed (such as succinyl-Leu-Tyr-|-NHMec, and Leu-Tyr-Leu-|-Tyr-Trp, in which cleavage of the -Tyr-|-Leu- and -Tyr-|-Trp bonds also occurs).. Its function is as follows. Cleaves peptides in various proteins in a process that requires ATP hydrolysis. Has a chymotrypsin-like activity. Plays a major role in the degradation of misfolded proteins. The protein is ATP-dependent Clp protease proteolytic subunit of Campylobacter jejuni subsp. jejuni serotype O:6 (strain 81116 / NCTC 11828).